A 116-amino-acid polypeptide reads, in one-letter code: Large ribosomal subunit protein uL23 (116 aa).

Belongs to the universal ribosomal protein uL23 family. As to quaternary structure, part of the 50S ribosomal subunit. Contacts protein L29, and trigger factor when it is bound to the ribosome.

One of the early assembly proteins it binds 23S rRNA. One of the proteins that surrounds the polypeptide exit tunnel on the outside of the ribosome. Forms the main docking site for trigger factor binding to the ribosome. This is Large ribosomal subunit protein uL23 from Psychrobacter arcticus (strain DSM 17307 / VKM B-2377 / 273-4).